Reading from the N-terminus, the 269-residue chain is Interleukin-1 beta (269 aa).

Residues 1 to 116 (MAEVPELASE…TRNNDACVHD (116 aa)) constitute a propeptide that is removed on maturation.

This sequence belongs to the IL-1 family. As to quaternary structure, monomer. In its precursor form, weakly interacts with full-length MEFV; the mature cytokine does not interact at all. Interacts with integrins ITGAV:ITGBV and ITGA5:ITGB1; integrin-binding is required for IL1B signaling. Interacts with cargo receptor TMED10; the interaction is direct and is required for the secretion of IL1B mature form. Interacts with HSP90AB1; the interaction facilitates cargo translocation into the ERGIC. Interacts with HSP90B1; the interaction facilitates cargo translocation into the ERGIC.

The protein resides in the cytoplasm. Its subcellular location is the cytosol. It is found in the secreted. It localises to the lysosome. The protein localises to the extracellular exosome. Functionally, potent pro-inflammatory cytokine. Initially discovered as the major endogenous pyrogen, induces prostaglandin synthesis, neutrophil influx and activation, T-cell activation and cytokine production, B-cell activation and antibody production, and fibroblast proliferation and collagen production. Promotes Th17 differentiation of T-cells. Synergizes with IL12/interleukin-12 to induce IFNG synthesis from T-helper 1 (Th1) cells. Plays a role in angiogenesis by inducing VEGF production synergistically with TNF and IL6. Involved in transduction of inflammation downstream of pyroptosis: its mature form is specifically released in the extracellular milieu by passing through the gasdermin-D (GSDMD) pore. The protein is Interleukin-1 beta (IL1B) of Macaca mulatta (Rhesus macaque).